Consider the following 111-residue polypeptide: T cell receptor beta variable 29-1 (111 aa).

A signal peptide spans 1-16 (MLSLLLLLLGLGSVFS). The Ig-like domain maps to 17 to 111 (AVISQKPSRD…DSSIYLCSVE (95 aa)). A disulfide bridge connects residues C38 and C108. N-linked (GlcNAc...) asparagine glycosylation is present at N87.

In terms of assembly, alpha-beta TR is a heterodimer composed of an alpha and beta chain; disulfide-linked. The alpha-beta TR is associated with the transmembrane signaling CD3 coreceptor proteins to form the TR-CD3 (TcR or TCR). The assembly of alpha-beta TR heterodimers with CD3 occurs in the endoplasmic reticulum where a single alpha-beta TR heterodimer associates with one CD3D-CD3E heterodimer, one CD3G-CD3E heterodimer and one CD247 homodimer forming a stable octameric structure. CD3D-CD3E and CD3G-CD3E heterodimers preferentially associate with TR alpha and TR beta chains, respectively. The association of the CD247 homodimer is the last step of TcR assembly in the endoplasmic reticulum and is required for transport to the cell surface.

It localises to the cell membrane. V region of the variable domain of T cell receptor (TR) beta chain that participates in the antigen recognition. Alpha-beta T cell receptors are antigen specific receptors which are essential to the immune response and are present on the cell surface of T lymphocytes. Recognize peptide-major histocompatibility (MH) (pMH) complexes that are displayed by antigen presenting cells (APC), a prerequisite for efficient T cell adaptive immunity against pathogens. Binding of alpha-beta TR to pMH complex initiates TR-CD3 clustering on the cell surface and intracellular activation of LCK that phosphorylates the ITAM motifs of CD3G, CD3D, CD3E and CD247 enabling the recruitment of ZAP70. In turn ZAP70 phosphorylates LAT, which recruits numerous signaling molecules to form the LAT signalosome. The LAT signalosome propagates signal branching to three major signaling pathways, the calcium, the mitogen-activated protein kinase (MAPK) kinase and the nuclear factor NF-kappa-B (NF-kB) pathways, leading to the mobilization of transcription factors that are critical for gene expression and essential for T cell growth and differentiation. The T cell repertoire is generated in the thymus, by V-(D)-J rearrangement. This repertoire is then shaped by intrathymic selection events to generate a peripheral T cell pool of self-MH restricted, non-autoaggressive T cells. Post-thymic interaction of alpha-beta TR with the pMH complexes shapes TR structural and functional avidity. The chain is T cell receptor beta variable 29-1 from Homo sapiens (Human).